The following is a 147-amino-acid chain: Probable WRKY transcription factor 45 (147 aa).

Residues 21-52 (TEFHGVDNSAQPTTSSEEKPRSKKKKKEREAR) are disordered. The segment at residues 59–124 (SQVDILDDGY…YQGVHTHAVD (66 aa)) is a DNA-binding region (WRKY). C90, C95, H119, and H121 together coordinate Zn(2+).

Belongs to the WRKY group I family.

The protein resides in the nucleus. Transcription factor. Interacts specifically with the W box (5'-(T)TGAC[CT]-3'), a frequently occurring elicitor-responsive cis-acting element. This chain is Probable WRKY transcription factor 45 (WRKY45), found in Arabidopsis thaliana (Mouse-ear cress).